The sequence spans 385 residues: Type III polyketide synthase C (385 aa).

Position 56–63 (56–63 (KLQHLCKS)) interacts with CoA. The Nucleophile role is filled by cysteine 165. A substrate-binding site is contributed by 217–218 (GD). CoA is bound by residues leucine 267, 307–310 (GGPA), and alanine 310.

Belongs to the thiolase-like superfamily. Chalcone/stilbene synthases family. In terms of assembly, homodimer.

The protein localises to the endoplasmic reticulum. Its pathway is secondary metabolite biosynthesis; flavonoid biosynthesis. Functionally, plant type III polyketide synthases (PKSs) that catalyzes the condensation of malonyl-CoA units with various CoA ester starter molecules to generate a diverse array of natural products including long-chain alkyl alpha-pyrones. In Arabidopsis thaliana (Mouse-ear cress), this protein is Type III polyketide synthase C.